We begin with the raw amino-acid sequence, 219 residues long: Cytidylate kinase (219 aa).

Gly-11 to Ala-19 is a binding site for ATP.

It belongs to the cytidylate kinase family. Type 1 subfamily.

The protein localises to the cytoplasm. The enzyme catalyses CMP + ATP = CDP + ADP. It carries out the reaction dCMP + ATP = dCDP + ADP. This chain is Cytidylate kinase, found in Mesoplasma florum (strain ATCC 33453 / NBRC 100688 / NCTC 11704 / L1) (Acholeplasma florum).